The sequence spans 588 residues: Adenine deaminase (588 aa).

The protein belongs to the metallo-dependent hydrolases superfamily. Adenine deaminase family. Homodimer. Mn(2+) is required as a cofactor.

It catalyses the reaction adenine + H2O + H(+) = hypoxanthine + NH4(+). This is Adenine deaminase from Escherichia coli O157:H7 (strain EC4115 / EHEC).